The following is a 699-amino-acid chain: Glycine--tRNA ligase beta subunit (699 aa).

The protein belongs to the class-II aminoacyl-tRNA synthetase family. In terms of assembly, tetramer of two alpha and two beta subunits.

The protein resides in the cytoplasm. The enzyme catalyses tRNA(Gly) + glycine + ATP = glycyl-tRNA(Gly) + AMP + diphosphate. The protein is Glycine--tRNA ligase beta subunit of Methylobacterium radiotolerans (strain ATCC 27329 / DSM 1819 / JCM 2831 / NBRC 15690 / NCIMB 10815 / 0-1).